A 309-amino-acid polypeptide reads, in one-letter code: Peptide methionine sulfoxide reductase MsrA/MsrB (309 aa).

Residues 1-153 (MIYLAGGCFW…PNGYCHIDIN (153 aa)) are peptide methionine sulfoxide reductase A. Residue cysteine 8 is part of the active site. Residues 170–293 (ATEIKEKLSA…NSLSITFIPK (124 aa)) form the MsrB domain. Cysteine 282 serves as the catalytic Nucleophile.

This sequence in the N-terminal section; belongs to the MsrA Met sulfoxide reductase family. It in the C-terminal section; belongs to the MsrB Met sulfoxide reductase family.

It carries out the reaction L-methionyl-[protein] + [thioredoxin]-disulfide + H2O = L-methionyl-(S)-S-oxide-[protein] + [thioredoxin]-dithiol. It catalyses the reaction [thioredoxin]-disulfide + L-methionine + H2O = L-methionine (S)-S-oxide + [thioredoxin]-dithiol. The enzyme catalyses L-methionyl-[protein] + [thioredoxin]-disulfide + H2O = L-methionyl-(R)-S-oxide-[protein] + [thioredoxin]-dithiol. Functionally, has an important function as a repair enzyme for proteins that have been inactivated by oxidation. Catalyzes the reversible oxidation-reduction of methionine sulfoxide in proteins to methionine. This chain is Peptide methionine sulfoxide reductase MsrA/MsrB (msrAB), found in Streptococcus pyogenes serotype M1.